The primary structure comprises 531 residues: Zinc finger C2HC domain-containing protein 1C (531 aa).

Positions 16-45 (MLPHNTTEAPGPHSAKQDSYEQSDSSQQSL) are disordered. A compositionally biased stretch (low complexity) spans 35–44 (YEQSDSSQQS). Residues 209-264 (VQIRRLEAAGESLEEEIRRKQILLRGKLKKTEEELRRIQTQKEQAKENENRELQKI) are a coiled coil. Disordered regions lie at residues 290 to 318 (FEEE…QLSD) and 334 to 387 (NKIR…PQLG). The span at 293–305 (EFSRDKREDETWE) shows a compositional bias: basic and acidic residues. Positions 306 to 315 (RSQQNSSPFQ) are enriched in polar residues. Positions 335–345 (KIRDRVSEPSM) are enriched in basic and acidic residues. Residues 366–380 (SSLSMAPDSSGSSGS) show a composition bias toward low complexity. C2HC/C3H-type zinc fingers lie at residues 385-414 (QLGE…MQGS) and 493-522 (DYIQ…IKNR). Zn(2+)-binding residues include Cys-389, Cys-392, His-404, Cys-408, Cys-497, Cys-500, His-512, and Cys-516.

The protein belongs to the ZC2HC1 family. Requires Zn(2+) as cofactor.

The chain is Zinc finger C2HC domain-containing protein 1C (ZC2HC1C) from Macaca fascicularis (Crab-eating macaque).